The sequence spans 312 residues: Aspartoacylase (312 aa).

Zn(2+) is bound by residues H20 and E23. N-acetyl-L-aspartate-binding residues include R62, N69, and R70. H115 lines the Zn(2+) pocket. N-acetyl-L-aspartate contacts are provided by Y163 and R167. Residue E177 is the Proton donor/acceptor of the active site. Y287 serves as a coordination point for N-acetyl-L-aspartate.

Belongs to the AspA/AstE family. Aspartoacylase subfamily. As to quaternary structure, homodimer. Zn(2+) is required as a cofactor. In terms of tissue distribution, detected in kidney proximal tubule cells (at protein level).

The protein resides in the cytoplasm. It is found in the nucleus. It catalyses the reaction an N-acyl-L-aspartate + H2O = a carboxylate + L-aspartate. The catalysed reaction is N-acetyl-L-aspartate + H2O = L-aspartate + acetate. Its function is as follows. Catalyzes the deacetylation of N-acetylaspartic acid (NAA) to produce acetate and L-aspartate. NAA occurs in high concentration in brain and its hydrolysis NAA plays a significant part in the maintenance of intact white matter. In other tissues it acts as a scavenger of NAA from body fluids. The chain is Aspartoacylase from Rattus norvegicus (Rat).